A 58-amino-acid polypeptide reads, in one-letter code: Small ribosomal subunit protein uS14 (58 aa).

The disordered stretch occupies residues 1–21 (MSESETEQTGEHASHRTGQTH). Positions 9–21 (TGEHASHRTGQTH) are enriched in basic and acidic residues. Zn(2+) is bound by residues Cys-23, Cys-26, Cys-41, and Cys-44.

Belongs to the universal ribosomal protein uS14 family. Zinc-binding uS14 subfamily. In terms of assembly, part of the 30S ribosomal subunit. It depends on Zn(2+) as a cofactor.

Functionally, binds 16S rRNA, required for the assembly of 30S particles. The sequence is that of Small ribosomal subunit protein uS14 from Haloquadratum walsbyi (strain DSM 16790 / HBSQ001).